Here is a 144-residue protein sequence, read N- to C-terminus: D-aminoacyl-tRNA deacylase (144 aa).

The Gly-cisPro motif, important for rejection of L-amino acids signature appears at 136–137 (GP).

Belongs to the DTD family. As to quaternary structure, homodimer.

It is found in the cytoplasm. It carries out the reaction glycyl-tRNA(Ala) + H2O = tRNA(Ala) + glycine + H(+). It catalyses the reaction a D-aminoacyl-tRNA + H2O = a tRNA + a D-alpha-amino acid + H(+). An aminoacyl-tRNA editing enzyme that deacylates mischarged D-aminoacyl-tRNAs. Also deacylates mischarged glycyl-tRNA(Ala), protecting cells against glycine mischarging by AlaRS. Acts via tRNA-based rather than protein-based catalysis; rejects L-amino acids rather than detecting D-amino acids in the active site. By recycling D-aminoacyl-tRNA to D-amino acids and free tRNA molecules, this enzyme counteracts the toxicity associated with the formation of D-aminoacyl-tRNA entities in vivo and helps enforce protein L-homochirality. This chain is D-aminoacyl-tRNA deacylase, found in Vibrio vulnificus (strain CMCP6).